We begin with the raw amino-acid sequence, 141 residues long: Pyrophosphate-energized proton pump (141 aa).

The next 3 helical transmembrane spans lie at 11 to 31, 46 to 66, and 121 to 141; these read GLIA…TLTV, GTNL…IVVI, and LAGL…AGMI.

This sequence belongs to the H(+)-translocating pyrophosphatase (TC 3.A.10) family. Homodimer. Mg(2+) is required as a cofactor.

The protein resides in the cell inner membrane. The catalysed reaction is diphosphate + H2O + H(+)(in) = 2 phosphate + 2 H(+)(out). In terms of biological role, proton pump that utilizes the energy of pyrophosphate hydrolysis as the driving force for proton movement across the membrane. Generates a proton motive force. The sequence is that of Pyrophosphate-energized proton pump (hppA) from Anaplasma marginale.